Reading from the N-terminus, the 228-residue chain is MLSALSNDPMYFPPLETAFDNGLLAYGGDLSPQRLLSAYTKGIFPWYDNNSPILWWSPDPRCILLPENFRIPKTIQRELKKCTFSVTINNAFTEVITACATLPRTKQKGTWITQDMKMAYIQLHKLGFSHSIEVWDNSTLVGGLYGVALGKAFFGESMFHIAPHASKLALVWLAQYLWSYNFDFIDCQMPTTHIMRYGATLISRNEFLTRLTIAVTTGTSQASTKEAL.

It belongs to the L/F-transferase family.

Its subcellular location is the cytoplasm. The enzyme catalyses N-terminal L-lysyl-[protein] + L-leucyl-tRNA(Leu) = N-terminal L-leucyl-L-lysyl-[protein] + tRNA(Leu) + H(+). The catalysed reaction is N-terminal L-arginyl-[protein] + L-leucyl-tRNA(Leu) = N-terminal L-leucyl-L-arginyl-[protein] + tRNA(Leu) + H(+). It catalyses the reaction L-phenylalanyl-tRNA(Phe) + an N-terminal L-alpha-aminoacyl-[protein] = an N-terminal L-phenylalanyl-L-alpha-aminoacyl-[protein] + tRNA(Phe). Functionally, functions in the N-end rule pathway of protein degradation where it conjugates Leu, Phe and, less efficiently, Met from aminoacyl-tRNAs to the N-termini of proteins containing an N-terminal arginine or lysine. The chain is Leucyl/phenylalanyl-tRNA--protein transferase from Lawsonia intracellularis (strain PHE/MN1-00).